The chain runs to 124 residues: Heat-labile enterotoxin B chain (124 aa).

The signal sequence occupies residues 1–21 (MNKVKCYVLFTALLSSLYAHG). Residues C30 and C107 are joined by a disulfide bond.

Heterohexamer of one A chain and of five B chains.

Functionally, the biological activity of the toxin is produced by the A chain, which activates intracellular adenyl cyclase. The chain is Heat-labile enterotoxin B chain (eltB) from Escherichia coli.